A 425-amino-acid chain; its full sequence is Phosphoribosylamine--glycine ligase (425 aa).

The 208-residue stretch at 110–317 (KEFMKRHGIP…LFDALLASVE (208 aa)) folds into the ATP-grasp domain. Position 137-198 (137-198 (ETCPTFPQVI…EAFLSGQEAS (62 aa))) interacts with ATP. Glu287 and Asn289 together coordinate Mg(2+).

This sequence belongs to the GARS family. Mg(2+) serves as cofactor. The cofactor is Mn(2+).

The enzyme catalyses 5-phospho-beta-D-ribosylamine + glycine + ATP = N(1)-(5-phospho-beta-D-ribosyl)glycinamide + ADP + phosphate + H(+). It functions in the pathway purine metabolism; IMP biosynthesis via de novo pathway; N(1)-(5-phospho-D-ribosyl)glycinamide from 5-phospho-alpha-D-ribose 1-diphosphate: step 2/2. The protein is Phosphoribosylamine--glycine ligase of Chlorobaculum tepidum (strain ATCC 49652 / DSM 12025 / NBRC 103806 / TLS) (Chlorobium tepidum).